A 496-amino-acid polypeptide reads, in one-letter code: Membrane-bound lytic murein transglycosylase F (496 aa).

A signal peptide spans 1 to 31 (MPIFSTRVLTYLRCIFRLFIGLMLLLTLVGC). A non-LT domain region spans residues 32–271 (DFYTPSSQLE…KLDEKYFGHV (240 aa)). Residues 273–496 (NFDFVDTRTF…AEVVKQITLR (224 aa)) are LT domain. Residue Glu-316 is part of the active site. Residues 464 to 485 (HRREELDEDDSSEPQSTERPTV) form a disordered region.

In the N-terminal section; belongs to the bacterial solute-binding protein 3 family. This sequence in the C-terminal section; belongs to the transglycosylase Slt family.

It is found in the cell outer membrane. The enzyme catalyses Exolytic cleavage of the (1-&gt;4)-beta-glycosidic linkage between N-acetylmuramic acid (MurNAc) and N-acetylglucosamine (GlcNAc) residues in peptidoglycan, from either the reducing or the non-reducing ends of the peptidoglycan chains, with concomitant formation of a 1,6-anhydrobond in the MurNAc residue.. Functionally, murein-degrading enzyme that degrades murein glycan strands and insoluble, high-molecular weight murein sacculi, with the concomitant formation of a 1,6-anhydromuramoyl product. Lytic transglycosylases (LTs) play an integral role in the metabolism of the peptidoglycan (PG) sacculus. Their lytic action creates space within the PG sacculus to allow for its expansion as well as for the insertion of various structures such as secretion systems and flagella. The sequence is that of Membrane-bound lytic murein transglycosylase F from Aeromonas salmonicida (strain A449).